The following is a 302-amino-acid chain: Phospho-N-acetylmuramoyl-pentapeptide-transferase (302 aa).

10 helical membrane passes run Met1–Arg21, Gly42–Ser62, Val67–Ile87, Ala101–Val121, Phe123–Val143, Gly154–Leu174, Gly178–Asn198, Ile204–Leu224, Phe229–Ile249, and Ile279–Gly299.

It belongs to the glycosyltransferase 4 family. MraY subfamily. The cofactor is Mg(2+).

Its subcellular location is the cell inner membrane. The enzyme catalyses UDP-N-acetyl-alpha-D-muramoyl-L-alanyl-gamma-D-glutamyl-meso-2,6-diaminopimeloyl-D-alanyl-D-alanine + di-trans,octa-cis-undecaprenyl phosphate = di-trans,octa-cis-undecaprenyl diphospho-N-acetyl-alpha-D-muramoyl-L-alanyl-D-glutamyl-meso-2,6-diaminopimeloyl-D-alanyl-D-alanine + UMP. Its pathway is cell wall biogenesis; peptidoglycan biosynthesis. Its function is as follows. Catalyzes the initial step of the lipid cycle reactions in the biosynthesis of the cell wall peptidoglycan: transfers peptidoglycan precursor phospho-MurNAc-pentapeptide from UDP-MurNAc-pentapeptide onto the lipid carrier undecaprenyl phosphate, yielding undecaprenyl-pyrophosphoryl-MurNAc-pentapeptide, known as lipid I. This Thermotoga neapolitana (strain ATCC 49049 / DSM 4359 / NBRC 107923 / NS-E) protein is Phospho-N-acetylmuramoyl-pentapeptide-transferase.